A 427-amino-acid chain; its full sequence is UPF0229 protein YeaH (427 aa).

The span at 79–90 (NDHFVQNDRIER) shows a compositional bias: basic and acidic residues. A disordered region spans residues 79–110 (NDHFVQNDRIERPQGGGGGSGSGQGQASQDGE). Residues 92–102 (QGGGGGSGSGQ) show a composition bias toward gly residues.

Belongs to the UPF0229 family.

In Escherichia coli O9:H4 (strain HS), this protein is UPF0229 protein YeaH.